A 95-amino-acid chain; its full sequence is Beta-defensin 132 (95 aa).

Residues 1 to 22 form the signal peptide; that stretch reads MKFLLLVLAALGFLTQVIPASA. 3 disulfides stabilise this stretch: Cys-27/Cys-55, Cys-35/Cys-49, and Cys-39/Cys-56. The interval 74–95 is disordered; that stretch reads HWQSRRRNTQRKDKKQQTTVTS. Residues 76-87 show a composition bias toward basic residues; sequence QSRRRNTQRKDK.

It belongs to the beta-defensin family.

The protein localises to the secreted. Has antibacterial activity. The polypeptide is Beta-defensin 132 (DEFB132) (Homo sapiens (Human)).